Reading from the N-terminus, the 115-residue chain is U3-lycotoxin-Ls1e (115 aa).

A signal peptide spans 1–20 (MKFVLLFGVLSLTLFSYSSA). Residues 21–44 (EMLDDFDQADEDELLSLIEKEEAR) constitute a propeptide that is removed on maturation. 4 disulfides stabilise this stretch: Cys-48-Cys-63, Cys-55-Cys-72, Cys-62-Cys-87, and Cys-74-Cys-85.

It belongs to the neurotoxin 19 (CSTX) family. 01 subfamily. As to expression, expressed by the venom gland.

The protein resides in the secreted. This Lycosa singoriensis (Wolf spider) protein is U3-lycotoxin-Ls1e.